The primary structure comprises 317 residues: tRNA dimethylallyltransferase (317 aa).

16–23 (GPTASGKS) serves as a coordination point for ATP. 18–23 (TASGKS) serves as a coordination point for substrate. 3 interaction with substrate tRNA regions span residues 41–44 (DSAQ), 165–169 (QRIQR), and 247–252 (RCVGYR).

Belongs to the IPP transferase family. Monomer. Requires Mg(2+) as cofactor.

It catalyses the reaction adenosine(37) in tRNA + dimethylallyl diphosphate = N(6)-dimethylallyladenosine(37) in tRNA + diphosphate. Functionally, catalyzes the transfer of a dimethylallyl group onto the adenine at position 37 in tRNAs that read codons beginning with uridine, leading to the formation of N6-(dimethylallyl)adenosine (i(6)A). This Nitrosomonas eutropha (strain DSM 101675 / C91 / Nm57) protein is tRNA dimethylallyltransferase.